We begin with the raw amino-acid sequence, 805 residues long: Sucrose synthase (805 aa).

The GT-B glycosyltransferase stretch occupies residues 275 to 752 (MVFNVVILSP…GLQRIEEKYT (478 aa)).

Belongs to the glycosyltransferase 1 family. Plant sucrose synthase subfamily.

The catalysed reaction is an NDP-alpha-D-glucose + D-fructose = a ribonucleoside 5'-diphosphate + sucrose + H(+). Functionally, sucrose-cleaving enzyme that provides UDP-glucose and fructose for various metabolic pathways. The sequence is that of Sucrose synthase (SS1) from Vigna radiata var. radiata (Mung bean).